Reading from the N-terminus, the 1196-residue chain is NACHT, LRR and PYD domains-containing protein 1b allele 5 (1196 aa).

Residues 1 to 22 (MEESPPKQKSNTKVTQHEGQQD) are disordered. In terms of domain architecture, NACHT spans 126–435 (QLVIIEGAAG…EFFAAISCIL (310 aa)). 132-139 (GAAGIGKS) serves as a coordination point for ATP. LRR repeat units follow at residues 627–647 (NLEGLDLSGNSLRYSVVQSLC) and 684–704 (SLTELYLQLNDLGDDGVRMLC). The tract at residues 789 to 922 (FWGPTGPVAT…GYTVLKNPSF (134 aa)) is ZU5. The 284-residue stretch at 789 to 1072 (FWGPTGPVAT…KFDHLCDQEF (284 aa)) folds into the FIIND domain. The UPA stretch occupies residues 923 to 1072 (SPMGVVLRII…KFDHLCDQEF (150 aa)). Residues 1106 to 1189 (HFMDQHREQL…HLVMDLFEKS (84 aa)) enclose the CARD domain.

It belongs to the NLRP family. As to quaternary structure, interacts with DPP9; leading to inhibit activation of the inflammasome. DPP9 acts via formation of a ternary complex, composed of a DPP9 homodimer, one full-length Nlrp1b protein, and one cleaved C-terminus of Nlrp1b (NACHT, LRR and PYD domains-containing protein 1b, C-terminus). Interacts with DPP8; leading to inhibit activation of the inflammasome, probably via formation of a ternary complex with DPP8. Interacts (via LRR repeats) with BCL2 and BCL2L1 (via the loop between motifs BH4 and BH3). Interacts with NOD2; this interaction may increase IL1B release. Interacts with EIF2AK2/PKR; this interaction requires EIF2AK2 activity, is accompanied by EIF2AK2 autophosphorylation and promotes inflammasome assembly in response to B.anthracis lethal toxin. Interacts with MEFV; this interaction targets Nlrp1b to degradation by autophagy, hence preventing excessive IL1B- and IL18-mediated inflammation. Interacts with the C-terminal part of Nlrp1b (NACHT, LRR and PYD domains-containing protein 1b, C-terminus) in absence of pathogens and other damage-associated signals. In terms of assembly, interacts with the N-terminal part of Nlrp1b (NACHT, LRR and PYD domains-containing protein 1b, N-terminus) in absence of pathogens and other damage-associated signals. Homomultimer; forms the Nlrp1b inflammasome polymeric complex, a filament composed of homopolymers of this form in response to pathogens and other damage-associated signals. The Nlrp1b inflammasome polymeric complex directly recruits pro-caspase-1 (proCASP1) independently of PYCARD/ASC. Interacts (via CARD domain) with CASP1 (via CARD domain); leading to CASP1 activation. Post-translationally, autocatalytically cleaved. Autocatalytic cleavage in FIIND region occurs constitutively, prior to activation signals, and is required for inflammasome activity (IL1B release), possibly by facilitating CASP1 binding. Both N- and C-terminal parts remain associated non-covalently. Ubiquitinated by the N-end rule pathway in response to pathogens and other damage-associated signals, leading to its degradation by the proteasome and subsequent release of the cleaved C-terminal part of the protein (NACHT, LRR and PYD domains-containing protein 1b, C-terminus), which polymerizes and forms the Nlrp1b inflammasome. In terms of processing, (Microbial infection) Cleavage by B.anthracis lethal toxin (LT) endopeptidase promotes ubiquitination and degradation of the N-terminal part, releasing the cleaved C-terminal part of the protein (NACHT, LRR and PYD domains-containing protein 1b, C-terminus), which polymerizes and forms the Nlrp1b inflammasome. In terms of tissue distribution, expressed in macrophages.

Its subcellular location is the cytoplasm. The protein resides in the cytosol. It is found in the inflammasome. Its activity is regulated as follows. Activated by cleavage by B.anthracis lethal toxin (LT) endopeptidase. Cleavage by LT promotes ubiquitination and degradation of the N-terminal part, releasing the cleaved C-terminal part of the protein (NACHT, LRR and PYD domains-containing protein 1b, C-terminus), which polymerizes and forms the Nlrp1b inflammasome. Nlrp1b inflammasome is inhibited by DPP8 and DPP9, which sequester the C-terminal fragment of Nlrp1b (NACHT, LRR and PYD domains-containing protein 1b, C-terminus) in a ternary complex, thereby preventing Nlrp1b oligomerization and activation. Nlrp1b inflammasome is activated by Val-boroPro (Talabostat, PT-100), an inhibitor of dipeptidyl peptidases DPP8 and DPP9. Val-boroPro relieves inhibition of DPP8 and/or DPP9 by promoting disruption of the ternary complex, releasing its C-terminal part from autoinhibition. Activated by metabolic inhibitors, such as 2-deoxy-D-glucose and sodium azide. Not activated by muramyl dipeptide, nor by full-length bacterial peptidoglycan. Its function is as follows. Acts as the sensor component of the Nlrp1b inflammasome, which mediates inflammasome activation in response to various pathogen-associated signals, leading to subsequent pyroptosis. Inflammasomes are supramolecular complexes that assemble in the cytosol in response to pathogens and other damage-associated signals and play critical roles in innate immunity and inflammation. Acts as a recognition receptor (PRR): recognizes specific pathogens and other damage-associated signals, such as B.anthracis lethal toxin (LT) or Val-boroPro inhibitor, and mediates the formation of the inflammasome polymeric complex. In response to pathogen-associated signals, the N-terminal part of Nlrp1b is degraded by the proteasome, releasing the cleaved C-terminal part of the protein (NACHT, LRR and PYD domains-containing protein 1b, C-terminus), which polymerizes to initiate the formation of the inflammasome complex: the inflammasome directly recruits pro-caspase-1 (proCASP1) independently of PYCARD/ASC and promotes caspase-1 (CASP1) activation, which subsequently cleaves and activates inflammatory cytokines IL1B and IL18 and gasdermin-D (GSDMD), leading to pyroptosis. In the absence of GSDMD expression, the Nlrp1b inflammasome is able to recruit and activate CASP8, leading to activation of gasdermin-E (GSDME). Activation of Nlrp1b inflammasome is also required for HMGB1 secretion; the active cytokines and HMGB1 stimulate inflammatory responses. Primary mediator of macrophage susceptibility to B.anthracis LT: in response to B.anthracis infection, macrophages and dendritic cells release IL1B and undergo pyroptosis. This early inflammatory response to the toxin increases resistance to infection by B.anthracis spores. In terms of biological role, constitutes the precursor of the Nlrp1b inflammasome, which mediates autoproteolytic processing within the FIIND domain to generate the N-terminal and C-terminal parts, which are associated non-covalently in absence of pathogens and other damage-associated signals. Regulatory part that prevents formation of the Nlrp1b inflammasome: in absence of pathogens and other damage-associated signals, interacts with the C-terminal part of Nlrp1b (NACHT, LRR and PYD domains-containing protein 1b, C-terminus), preventing activation of the Nlrp1b inflammasome. In response to pathogen-associated signals, this part is ubiquitinated by the N-end rule pathway and degraded by the proteasome, releasing the cleaved C-terminal part of the protein, which polymerizes and forms the Nlrp1b inflammasome. Functionally, constitutes the active part of the Nlrp1b inflammasome. In absence of pathogens and other damage-associated signals, interacts with the N-terminal part of Nlrp1b (NACHT, LRR and PYD domains-containing protein 1b, N-terminus), preventing activation of the Nlrp1b inflammasome. In response to pathogen-associated signals, the N-terminal part of Nlrp1b is degraded by the proteasome, releasing this form, which polymerizes to form the Nlrp1b inflammasome complex: the Nlrp1b inflammasome complex then directly recruits pro-caspase-1 (proCASP1) and promotes caspase-1 (CASP1) activation, leading to gasdermin-D (GSDMD) cleavage and subsequent pyroptosis. This chain is NACHT, LRR and PYD domains-containing protein 1b allele 5 (Nlrp1b), found in Mus musculus (Mouse).